The following is a 374-amino-acid chain: Chaperone protein DnaJ (374 aa).

The J domain occupies 5–70; that stretch reads DYYEVLGVER…SKRAAFDQYG (66 aa). Residues 133 to 211 form a CR-type zinc finger; that stretch reads GTTVSIRVPT…CHGEGRVEEY (79 aa). 8 residues coordinate Zn(2+): C146, C149, C163, C166, C185, C188, C199, and C202. 4 CXXCXGXG motif repeats span residues 146–153, 163–170, 185–192, and 199–206; these read CQPCDGSG, CPTCGGIG, CPRCHGQG, and CTSCHGEG.

The protein belongs to the DnaJ family. In terms of assembly, homodimer. The cofactor is Zn(2+).

The protein localises to the cytoplasm. In terms of biological role, participates actively in the response to hyperosmotic and heat shock by preventing the aggregation of stress-denatured proteins and by disaggregating proteins, also in an autonomous, DnaK-independent fashion. Unfolded proteins bind initially to DnaJ; upon interaction with the DnaJ-bound protein, DnaK hydrolyzes its bound ATP, resulting in the formation of a stable complex. GrpE releases ADP from DnaK; ATP binding to DnaK triggers the release of the substrate protein, thus completing the reaction cycle. Several rounds of ATP-dependent interactions between DnaJ, DnaK and GrpE are required for fully efficient folding. Also involved, together with DnaK and GrpE, in the DNA replication of plasmids through activation of initiation proteins. This chain is Chaperone protein DnaJ, found in Pseudomonas putida (strain ATCC 700007 / DSM 6899 / JCM 31910 / BCRC 17059 / LMG 24140 / F1).